A 338-amino-acid chain; its full sequence is Acetylcholinesterase (338 aa).

N-linked (GlcNAc...) asparagine glycosylation is present at asparagine 8. The active-site Acyl-ester intermediate is the serine 99. Cysteines 153 and 164 form a disulfide. Residue glutamate 226 is the Charge relay system of the active site.

This sequence belongs to the type-B carboxylesterase/lipase family.

It is found in the synapse. It localises to the secreted. Its subcellular location is the cell membrane. The catalysed reaction is acetylcholine + H2O = choline + acetate + H(+). Functionally, terminates signal transduction at the neuromuscular junction by rapid hydrolysis of the acetylcholine released into the synaptic cleft. The chain is Acetylcholinesterase (ache) from Myxine glutinosa (Atlantic hagfish).